A 203-amino-acid polypeptide reads, in one-letter code: Phosphatidylethanolamine N-methyltransferase (203 aa).

The enzyme catalyses a 1,2-diacyl-sn-glycero-3-phosphoethanolamine + S-adenosyl-L-methionine = a 1,2-diacyl-sn-glycero-3-phospho-N-methylethanolamine + S-adenosyl-L-homocysteine + H(+). It functions in the pathway phospholipid metabolism; phosphatidylcholine biosynthesis. Its function is as follows. This enzyme catalyzes three distinct methylation reactions for converting phosphatidylethanolamine to phosphatidylcholine. The polypeptide is Phosphatidylethanolamine N-methyltransferase (pmtA) (Cereibacter sphaeroides (Rhodobacter sphaeroides)).